A 393-amino-acid polypeptide reads, in one-letter code: Chalcone synthase 2 (393 aa).

Cysteine 166 is a catalytic residue.

The protein belongs to the thiolase-like superfamily. Chalcone/stilbene synthases family.

The enzyme catalyses (E)-4-coumaroyl-CoA + 3 malonyl-CoA + 3 H(+) = 2',4,4',6'-tetrahydroxychalcone + 3 CO2 + 4 CoA. Its pathway is secondary metabolite biosynthesis; flavonoid biosynthesis. The primary product of this enzyme is 4,2',4',6'-tetrahydroxychalcone (also termed naringenin-chalcone or chalcone) which can under specific conditions spontaneously isomerize into naringenin. This Ruta graveolens (Common rue) protein is Chalcone synthase 2 (CHS2).